The chain runs to 422 residues: MRQLCRGRVLGISVAIAHGVFSGSLNILLKFLISRYQFSFLTLVQCLTSSTAALSLELLRRLGLIAVPPFGLSLARSFAGVAVLSTLQSSLTLWSLRGLSLPMYVVFKRCLPLVTMLIGVLVLKNGAPSPGVLAAVLITTCGAALAGAGDLTGDPIGYVTGVLAVLVHAAYLVLIQKASADTEHGPLTAQYVIAVSATPLLVICSFASTDSIHAWTFPGWKDPAMVSIFVACILIGCAMNFTTLHCTYINSAVTTSFVGVVKSIATITVGMVAFSDVEPTSLFIAGVVVNTLGSIIYCVAKFLETRRQSNYEDLESQAEGEERQPSGDQLPFVMEELPAKSGNSEPESAEGAGDSVQQGGQESRGSIRGISLAARSSRAEGHSDEVGRRSLKDTYLEVWRLVRGTKYMKKDYLMENEALPSP.

The next 10 helical transmembrane spans lie at 9 to 29 (VLGI…NILL), 38 to 58 (FSFL…SLEL), 64 to 84 (LIAV…VAVL), 103 to 123 (MYVV…VLVL), 131 to 151 (GVLA…AGDL), 155 to 175 (PIGY…LVLI), 187 to 207 (LTAQ…CSFA), 224 to 244 (AMVS…FTTL), 257 to 277 (FVGV…FSDV), and 280 to 300 (TSLF…YCVA). Residues 339–365 (AKSGNSEPESAEGAGDSVQQGGQESRG) form a disordered region. Residues 355 to 364 (SVQQGGQESR) are compositionally biased toward polar residues.

The protein belongs to the TPT transporter family. SLC35D subfamily. In terms of assembly, could interact with ATG14, BECN1 and PIK3C3 that form the PI3KC3-C1/AIC/autophagy initiation complex; enhancing the formation of the AIC and promoting autophagy. In terms of tissue distribution, expressed in brain. Expressed in subsets of dopaminergic neurons. Expressed in maturing megakaryocytes.

Its subcellular location is the cytoplasmic vesicle. The protein localises to the secretory vesicle. It is found in the synaptic vesicle membrane. It localises to the early endosome membrane. The protein resides in the endoplasmic reticulum membrane. It carries out the reaction UDP-alpha-D-glucose(in) = UDP-alpha-D-glucose(out). Its activity is regulated as follows. Inhibited by proton uncouplers that directly abolish the proton electrochemical gradient. In terms of biological role, probable UDP-glucose transmembrane transporter involved in UDP-glucose transport from the cytosol to the lumen of synaptic vesicles. It is involved in platelet dense granules maturation. Functionally, alternatively, could function as a molecular adapter enhancing the formation of the PI3KC3-C1/AIC/autophagy initiation complex to promote autophagy in dopaminergic neurons. Could also regulate the plasma membrane localization of the D(1A) dopamine receptor/DRD1 and dopamine signaling. The protein is Solute carrier family 35 member D3 of Mus musculus (Mouse).